Consider the following 247-residue polypeptide: 2,3-bisphosphoglycerate-dependent phosphoglycerate mutase (247 aa).

Substrate is bound by residues 8–15 (RHGESVWN), 21–22 (TG), Arg60, 87–90 (ERHY), Lys98, 114–115 (RR), and 183–184 (GN). Catalysis depends on His9, which acts as the Tele-phosphohistidine intermediate. Glu87 (proton donor/acceptor) is an active-site residue.

The protein belongs to the phosphoglycerate mutase family. BPG-dependent PGAM subfamily. Homodimer.

The enzyme catalyses (2R)-2-phosphoglycerate = (2R)-3-phosphoglycerate. It functions in the pathway carbohydrate degradation; glycolysis; pyruvate from D-glyceraldehyde 3-phosphate: step 3/5. In terms of biological role, catalyzes the interconversion of 2-phosphoglycerate and 3-phosphoglycerate. This chain is 2,3-bisphosphoglycerate-dependent phosphoglycerate mutase, found in Geobacter metallireducens (strain ATCC 53774 / DSM 7210 / GS-15).